The primary structure comprises 638 residues: uncharacterized protein (638 aa).

This is an uncharacterized protein from Homo sapiens (Human).